The sequence spans 156 residues: Small ribosomal subunit protein uS7 (156 aa).

The protein belongs to the universal ribosomal protein uS7 family. In terms of assembly, part of the 30S ribosomal subunit. Contacts proteins S9 and S11.

One of the primary rRNA binding proteins, it binds directly to 16S rRNA where it nucleates assembly of the head domain of the 30S subunit. Is located at the subunit interface close to the decoding center, probably blocks exit of the E-site tRNA. The sequence is that of Small ribosomal subunit protein uS7 from Hamiltonella defensa subsp. Acyrthosiphon pisum (strain 5AT).